The sequence spans 128 residues: MGLMWGLFSVIIASAAQLSLGYAASHLPPMTQFWDFIAAFFAFGPGARMLVVGLVGYLLSVFCWYKALHQLALSKAYALLSMSYVLVWIASMVLPGWEGTFSLKALLGVACIMSGLMLIFLPTTKQRY.

Residues 1 to 21 (MGLMWGLFSVIIASAAQLSLG) form a helical membrane-spanning segment. Residues 22 to 35 (YAASHLPPMTQFWD) are Periplasmic-facing. Residues 36 to 56 (FIAAFFAFGPGARMLVVGLVG) traverse the membrane as a helical segment. Residues 57–76 (YLLSVFCWYKALHQLALSKA) are Cytoplasmic-facing. The chain crosses the membrane as a helical span at residues 77–97 (YALLSMSYVLVWIASMVLPGW). Residues 98–100 (EGT) lie on the Periplasmic side of the membrane. The chain crosses the membrane as a helical span at residues 101 to 121 (FSLKALLGVACIMSGLMLIFL). At 122–128 (PTTKQRY) the chain is on the cytoplasmic side.

Belongs to the ArnF family. As to quaternary structure, heterodimer of ArnE and ArnF.

It is found in the cell inner membrane. It functions in the pathway bacterial outer membrane biogenesis; lipopolysaccharide biosynthesis. Translocates 4-amino-4-deoxy-L-arabinose-phosphoundecaprenol (alpha-L-Ara4N-phosphoundecaprenol) from the cytoplasmic to the periplasmic side of the inner membrane. The sequence is that of Probable 4-amino-4-deoxy-L-arabinose-phosphoundecaprenol flippase subunit ArnF from Escherichia fergusonii (strain ATCC 35469 / DSM 13698 / CCUG 18766 / IAM 14443 / JCM 21226 / LMG 7866 / NBRC 102419 / NCTC 12128 / CDC 0568-73).